A 233-amino-acid polypeptide reads, in one-letter code: Fibroblast growth factor 8 (233 aa).

Positions 1–22 are cleaved as a signal peptide; that stretch reads MGSPRSALSCLLLHLLVLCLQA. Asparagine 155 carries N-linked (GlcNAc...) asparagine glycosylation.

Belongs to the heparin-binding growth factors family. As to quaternary structure, monomer. Homodimer. Interacts with FGFR1, FGFR2, FGFR3 and FGFR4. Affinity between fibroblast growth factors (FGFs) and their receptors is increased by heparan sulfate glycosaminoglycans that function as coreceptors.

Its subcellular location is the secreted. Functionally, plays an important role in the regulation of embryonic development, cell proliferation, cell differentiation and cell migration. Required for normal brain, eye, ear and limb development during embryogenesis. Required for normal development of the gonadotropin-releasing hormone (GnRH) neuronal system. Plays a role in neurite outgrowth in hippocampal cells. The polypeptide is Fibroblast growth factor 8 (FGF8) (Homo sapiens (Human)).